We begin with the raw amino-acid sequence, 600 residues long: 1-deoxy-D-xylulose-5-phosphate synthase (600 aa).

Thiamine diphosphate is bound by residues His-57 and 98-100 (GHA). Residue Asp-125 participates in Mg(2+) binding. Residues 126-127 (AS), Asn-155, Tyr-264, and Glu-343 each bind thiamine diphosphate. Residue Asn-155 coordinates Mg(2+).

Belongs to the transketolase family. DXPS subfamily. Homodimer. The cofactor is Mg(2+). It depends on thiamine diphosphate as a cofactor.

It carries out the reaction D-glyceraldehyde 3-phosphate + pyruvate + H(+) = 1-deoxy-D-xylulose 5-phosphate + CO2. The protein operates within metabolic intermediate biosynthesis; 1-deoxy-D-xylulose 5-phosphate biosynthesis; 1-deoxy-D-xylulose 5-phosphate from D-glyceraldehyde 3-phosphate and pyruvate: step 1/1. Catalyzes the acyloin condensation reaction between C atoms 2 and 3 of pyruvate and glyceraldehyde 3-phosphate to yield 1-deoxy-D-xylulose-5-phosphate (DXP). This chain is 1-deoxy-D-xylulose-5-phosphate synthase, found in Fusobacterium nucleatum subsp. nucleatum (strain ATCC 25586 / DSM 15643 / BCRC 10681 / CIP 101130 / JCM 8532 / KCTC 2640 / LMG 13131 / VPI 4355).